The sequence spans 1001 residues: Translation initiation factor IF-2 (1001 aa).

Residues 34–404 are disordered; it reads KSHSSTISES…SRGDRRDRKE (371 aa). Basic and acidic residues predominate over residues 67-80; the sequence is SRPESKEDKSDPKQ. Pro residues-rich tracts occupy residues 98 to 107, 147 to 157, and 163 to 172; these read PARPTPPPRP, PTQPLAPPPVP, and PSKPAPPTPP. A compositionally biased stretch (low complexity) spans 173-190; that stretch reads AKKAAPAPRLAGPPGRTA. Basic and acidic residues-rich tracts occupy residues 212 to 230 and 238 to 252; these read SLKDNRGQARSPGDREEKV and PKPKVELRRPKPPRP. The segment covering 332-342 has biased composition (acidic residues); it reads DDDDDDLDIDG. 2 stretches are compositionally biased toward low complexity: residues 362 to 371 and 385 to 394; these read KSLAAKPSTP and AGSSAGGSSR. The segment covering 395–404 has biased composition (basic and acidic residues); the sequence is SRGDRRDRKE. One can recognise a tr-type G domain in the interval 493–666; it reads RRPPVVTIMG…LLVSEVEELV (174 aa). Residues 502-509 are G1; it reads GHVDHGKT. A GTP-binding site is contributed by 502 to 509; it reads GHVDHGKT. Positions 527–531 are G2; it reads GITQH. The tract at residues 552-555 is G3; that stretch reads DTPG. GTP is bound by residues 552-556 and 606-609; these read DTPGH and NKVD. Positions 606 to 609 are G4; sequence NKVD. A G5 region spans residues 642 to 644; that stretch reads SAL.

This sequence belongs to the TRAFAC class translation factor GTPase superfamily. Classic translation factor GTPase family. IF-2 subfamily.

It localises to the cytoplasm. In terms of biological role, one of the essential components for the initiation of protein synthesis. Protects formylmethionyl-tRNA from spontaneous hydrolysis and promotes its binding to the 30S ribosomal subunits. Also involved in the hydrolysis of GTP during the formation of the 70S ribosomal complex. This Synechocystis sp. (strain ATCC 27184 / PCC 6803 / Kazusa) protein is Translation initiation factor IF-2 (infB).